Here is a 533-residue protein sequence, read N- to C-terminus: Receptor homology region, transmembrane domain- and RING domain-containing protein 1 (533 aa).

The first 26 residues, 1–26 (MNRRRTMLLLICLCATFCLMTQLGAA), serve as a signal peptide directing secretion. Residues 27 to 167 (NVVLMGTNLT…LPAFENSAWS (141 aa)) lie on the Lumenal side of the membrane. The N-linked (GlcNAc...) asparagine glycan is linked to Asn-34. Residues Cys-68 and Cys-91 are joined by a disulfide bond. The region spanning 84–145 (ALIIRGGCTF…ISKASGEVLK (62 aa)) is the PA domain. The chain crosses the membrane as a helical span at residues 168–188 (IMAISFISLLAMSAVLATCFF). The Cytoplasmic portion of the chain corresponds to 189–533 (VRRHHIRRDR…MASAQSLPGC (345 aa)). Residues 236–278 (CAICLEDYNVGEKLRVLPCRHKFHAACVDLWLTTWRTFCPVCK) form an RING-type; atypical zinc finger. Disordered regions lie at residues 309–329 (SFRS…PSSQ) and 440–476 (LRRC…LAGA). Residues 448-463 (PSLSTMAPQSPQQSQL) are compositionally biased toward polar residues.

The protein localises to the prevacuolar compartment membrane. The protein resides in the protein storage vacuole membrane. It localises to the golgi apparatus membrane. Involved in the trafficking of vacuolar proteins. Functions probably as a sorting receptor for protein trafficking to the protein storage vacuole (PSV) by binding the C-terminal vacuolar sorting determinant (VSD) of vacuolar-sorted proteins. In Oryza sativa subsp. japonica (Rice), this protein is Receptor homology region, transmembrane domain- and RING domain-containing protein 1.